A 338-amino-acid polypeptide reads, in one-letter code: tRNA N6-adenosine threonylcarbamoyltransferase (338 aa).

Residues histidine 114 and histidine 118 each coordinate Fe cation. Substrate contacts are provided by residues 136–140, aspartate 169, glycine 182, aspartate 186, and asparagine 275; that span reads LVSGG. Residue aspartate 301 participates in Fe cation binding.

The protein belongs to the KAE1 / TsaD family. The cofactor is Fe(2+).

The protein resides in the cytoplasm. It carries out the reaction L-threonylcarbamoyladenylate + adenosine(37) in tRNA = N(6)-L-threonylcarbamoyladenosine(37) in tRNA + AMP + H(+). Required for the formation of a threonylcarbamoyl group on adenosine at position 37 (t(6)A37) in tRNAs that read codons beginning with adenine. Is involved in the transfer of the threonylcarbamoyl moiety of threonylcarbamoyl-AMP (TC-AMP) to the N6 group of A37, together with TsaE and TsaB. TsaD likely plays a direct catalytic role in this reaction. This chain is tRNA N6-adenosine threonylcarbamoyltransferase, found in Streptococcus equi subsp. zooepidemicus (strain MGCS10565).